We begin with the raw amino-acid sequence, 235 residues long: FsC-acetyl coenzyme A-N(2)-transacetylase (235 aa).

Positions 14-190 (LELVPLGHEH…RYSITREEWL (177 aa)) constitute an N-acetyltransferase domain. CoA contacts are provided by residues 106-108 (FRV), glycine 114, asparagine 146, and 151-153 (AVM).

It functions in the pathway siderophore biosynthesis. Functionally, fsC-acetyl coenzyme A-N(2)-transacetylase; part of the siderophore biosynthetic pathway. Aspergillus fumigatus produces 4 types of siderophores, low-molecular-mass iron chelators, including excreted fusarinine C (FsC) and triacetylfusarinine C (TAFC) for iron uptake and intacellular ferricrocin (FC) for hyphal and hydroxyferricrocin (HFC) for conidial iron distribution and storage. TAFC consists of 3 N(2)-acetyl-N(5)-anhydromevalonyl-N(5)-hydroxyornithine residues cyclically linked by ester bonds; FC is a cyclic hexapeptide with the structure Gly-Ser-Gly-(N(5)-acetyl-N(5)-hydroxyornithine)x3. The biosynthesis of all four siderophores depends on the hydroxylation of ornithine, catalyzed by the monooxygenase sidA. Subsequently, the pathways for biosynthesis of extra- and intracellular siderophores split. For biosynthesis of extracellular siderophores, the transacylase sidF transfers anhydromevalonyl to N(5)-hydroxyornithine. The required anhydromevalonyl-CoA moiety is derived from mevalonate by CoA ligation and dehydration catalyzed by sidI and sidH respectively. The acetylation of N(5)-hydroxyornithine for FC biosynthesis involves the constitutively expressed sidL. FC is hydroxylated to HFC by an as yet uncharacterized enzyme during conidiation. Assembly of fusarinine C (FsC) and FC is catalyzed by two different nonribosomal peptide synthetases (NRPS), sidD and sidC respectively. Subsequently, sidG catalyzes N2-acetylation of FsC for forming TAFC. Both extra- and intracellular siderophores are crucial for growth during iron limitation and virulence. The chain is FsC-acetyl coenzyme A-N(2)-transacetylase from Aspergillus fumigatus (strain ATCC MYA-4609 / CBS 101355 / FGSC A1100 / Af293) (Neosartorya fumigata).